Here is a 928-residue protein sequence, read N- to C-terminus: cGMP-dependent 3',5'-cyclic phosphodiesterase (928 aa).

The residue at position 109 (Ser-109) is a Phosphoserine. A disordered region spans residues 188-210 (RRPEAVQNTSADPSEDQKDEKGY). 2 GAF domains span residues 228-365 (DATS…GTVL) and 397-536 (DVSV…GISI). 3',5'-cyclic GMP contacts are provided by Ser-419, Asp-434, Ile-453, Tyr-476, and Thr-487. A PDEase domain is found at 566 to 890 (SDDEYTKLLH…EHWTKVSHKF (325 aa)). His-644 functions as the Proton donor in the catalytic mechanism. 4 residues coordinate Zn(2+): His-648, His-684, Asp-685, and Asp-796. Asp-685 contributes to the Mg(2+) binding site.

It belongs to the cyclic nucleotide phosphodiesterase family. PDE2 subfamily. In terms of assembly, homodimer. Zn(2+) is required as a cofactor. Mg(2+) serves as cofactor. Expressed in brain and liver.

The protein localises to the cell membrane. It is found in the cytoplasm. The protein resides in the mitochondrion matrix. It localises to the mitochondrion inner membrane. Its subcellular location is the mitochondrion outer membrane. The catalysed reaction is a nucleoside 3',5'-cyclic phosphate + H2O = a nucleoside 5'-phosphate + H(+). It catalyses the reaction 3',5'-cyclic GMP + H2O = GMP + H(+). It carries out the reaction 3',5'-cyclic AMP + H2O = AMP + H(+). With respect to regulation, the 3',5'-cyclic-AMP phosphodiesterase activity is stimulated by 3',5'-cyclic GMP. Specifically inhibited by Bay 60-7550. When repressed, protected from ionomycin- but not staurosporin-induced cell death. In terms of biological role, cGMP-activated cyclic nucleotide phosphodiesterase with a dual-specificity for the second messengers cAMP and cGMP, which are key regulators of many important physiological processes. Has a higher efficiency with cGMP compared to cAMP. Plays a role in cell growth and migration. Its function is as follows. Regulates mitochondrial cAMP levels and respiration. Involved in the regulation of mitochondria morphology/dynamics and apoptotic cell death via local modulation of cAMP/PKA signaling in the mitochondrion, including the monitoring of local cAMP levels at the outer mitochondrial membrane and of PKA-dependent phosphorylation of Dnm1l. The polypeptide is cGMP-dependent 3',5'-cyclic phosphodiesterase (Rattus norvegicus (Rat)).